The sequence spans 715 residues: ATP-dependent zinc metalloprotease FtsH (715 aa).

Residues 1-10 (MKNKNRGFFR) are Cytoplasmic-facing. The helical transmembrane segment at 11-31 (SSLSYAFVILAVIFLIYSFFG) threads the bilayer. Over 32–137 (RSDGSVKHLS…KPAASNFWGS (106 aa)) the chain is Extracellular. A helical transmembrane segment spans residues 138-158 (MLTLILPTLIMFALLYWMLIG). Residues 159–715 (SQRGQGGSGG…LLDAVNNKFD (557 aa)) lie on the Cytoplasmic side of the membrane. The tract at residues 167–187 (GGPGGIMSFGRSKAKPADPKQ) is disordered. 233 to 240 (GPPGTGKT) contacts ATP. Residue histidine 455 participates in Zn(2+) binding. The active site involves glutamate 456. Histidine 459 and aspartate 531 together coordinate Zn(2+).

The protein in the central section; belongs to the AAA ATPase family. In the C-terminal section; belongs to the peptidase M41 family. As to quaternary structure, homohexamer. Zn(2+) serves as cofactor.

Its subcellular location is the cell membrane. Functionally, acts as a processive, ATP-dependent zinc metallopeptidase for both cytoplasmic and membrane proteins. Plays a role in the quality control of integral membrane proteins. Its function is as follows. Can complement an E.coli ftsH disruption mutant. The chain is ATP-dependent zinc metalloprotease FtsH from Oenococcus oeni (Leuconostoc oenos).